The following is a 383-amino-acid chain: BRISC and BRCA1-A complex member 2 (383 aa).

Met-1 is subject to N-acetylmethionine. The residue at position 2 (Ser-2) is a Phosphoserine. UEV-like stretches follow at residues 30–147 (DATN…TLLE) and 275–364 (IAAF…RAKA).

Belongs to the BABAM2 family. In terms of assembly, component of the ARISC complex, at least composed of UIMC1/RAP80, ABRAXAS1, BRCC3/BRCC36, BABAM2 and BABAM1/NBA1. Component of the BRCA1-A complex, at least composed of BRCA1, BARD1, UIMC1/RAP80, ABRAXAS1, BRCC3/BRCC36, BABAM2 and BABAM1/NBA1. In the BRCA1-A complex, interacts directly with ABRAXAS1, BRCC3/BRCC36 and BABAM1/NBA1. Binds polyubiquitin. Component of the BRISC complex, at least composed of ABRAXAS2, BRCC3/BRCC36, BABAM2 and BABAM1/NBA1. Identified in a complex with SHMT2 and the other subunits of the BRISC complex. Component of the BRCA1/BRCA2 containing complex (BRCC), which also contains BRCA1, BRCA2, BARD1, BRCC3/BRCC36 and RAD51. BRCC is a ubiquitin E3 ligase complex that enhances cellular survival following DNA damage. May interact with FAS and TNFRSF1A. Expressed in all cell lines examined. Highly expressed in placenta.

The protein resides in the cytoplasm. The protein localises to the nucleus. Its function is as follows. Component of the BRCA1-A complex, a complex that specifically recognizes 'Lys-63'-linked ubiquitinated histones H2A and H2AX at DNA lesions sites, leading to target the BRCA1-BARD1 heterodimer to sites of DNA damage at double-strand breaks (DSBs). The BRCA1-A complex also possesses deubiquitinase activity that specifically removes 'Lys-63'-linked ubiquitin on histones H2A and H2AX. In the BRCA1-A complex, it acts as an adapter that bridges the interaction between BABAM1/NBA1 and the rest of the complex, thereby being required for the complex integrity and modulating the E3 ubiquitin ligase activity of the BRCA1-BARD1 heterodimer. Component of the BRISC complex, a multiprotein complex that specifically cleaves 'Lys-63'-linked ubiquitin in various substrates. Within the BRISC complex, acts as an adapter that bridges the interaction between BABAM1/NBA1 and the rest of the complex, thereby being required for the complex integrity. The BRISC complex is required for normal mitotic spindle assembly and microtubule attachment to kinetochores via its role in deubiquitinating NUMA1. The BRISC complex plays a role in interferon signaling via its role in the deubiquitination of the interferon receptor IFNAR1; deubiquitination increases IFNAR1 activity by enhancing its stability and cell surface expression. Down-regulates the response to bacterial lipopolysaccharide (LPS) via its role in IFNAR1 deubiquitination. May play a role in homeostasis or cellular differentiation in cells of neural, epithelial and germline origins. May also act as a death receptor-associated anti-apoptotic protein, which inhibits the mitochondrial apoptotic pathway. May regulate TNF-alpha signaling through its interactions with TNFRSF1A; however these effects may be indirect. The protein is BRISC and BRCA1-A complex member 2 of Homo sapiens (Human).